A 382-amino-acid polypeptide reads, in one-letter code: Adaptive-response sensory kinase SasA (382 aa).

The region spanning 160-382 (MLAHDLRSPL…CFHFTLPVYR (223 aa)) is the Histidine kinase domain. H163 is subject to Phosphohistidine; by autocatalysis.

As to quaternary structure, homooligomerizes. Interacts with KaiC. Participates in the KaiABC clock complex, whose core is composed of a KaiC homohexamer, 6 KaiB and up to 6 KaiA dimers. SasA and KaiB(fs) compete to bind to KaiC.

It catalyses the reaction ATP + protein L-histidine = ADP + protein N-phospho-L-histidine.. Member of the two-component regulatory system SasA/RpaA involved in genome-wide circadian gene expression. One of several clock output pathways. Participates in the Kai clock protein complex, the main circadian regulator in cyanobacteria, via its interaction with KaiC. KaiC enhances the autophosphorylation activity of SasA, which then transfers its phosphate group to RpaA to activate it. In addition to its output function, recruits fold-shifted KaiB (KaiB(fs)) to KaiC to cooperatively form the KaiB(6):KaiC(6) complex (independent of SasA kinase activity). Required for robustness of the circadian rhythm of gene expression and is involved in clock output, also required for adaptation to light/dark cycles. The sequence is that of Adaptive-response sensory kinase SasA from Crocosphaera subtropica (strain ATCC 51142 / BH68) (Cyanothece sp. (strain ATCC 51142)).